The sequence spans 87 residues: Glutaredoxin (87 aa).

Positions 1–87 (MFVVIFGRPG…YAKENLGLFD (87 aa)) constitute a Glutaredoxin domain. A disulfide bridge connects residues Cys11 and Cys14.

Belongs to the glutaredoxin family. Monomer.

Its subcellular location is the cytoplasm. Its function is as follows. Has a glutathione-disulfide oxidoreductase activity in the presence of NADPH and glutathione reductase. Reduces low molecular weight disulfides and proteins. This Vibrio cholerae serotype O1 (strain ATCC 39315 / El Tor Inaba N16961) protein is Glutaredoxin (grx).